Reading from the N-terminus, the 440-residue chain is Transposon Ty1-BL Gag polyprotein (440 aa).

Composition is skewed to polar residues over residues 20–31 (SVTSKEVQTTQD), 46–55 (VSTQANSQQP), and 137–168 (VGTH…TNQH). Disordered stretches follow at residues 20 to 84 (SVTS…QNGP), 137 to 173 (VGTH…RPPP), and 350 to 424 (QQES…TTEP). Positions 299–401 (NNGIPINNKV…NSQSRTARAH (103 aa)) are RNA-binding. Residues 363-372 (SPSDEKKDSR) are compositionally biased toward basic and acidic residues. Residues 373 to 411 (TYTNTTKPKSITRNSQKPNNSQSRTARAHNVSTFNNSPG) are compositionally biased toward polar residues.

Homotrimer.

Its subcellular location is the cytoplasm. In terms of biological role, capsid protein (CA) is the structural component of the virus-like particle (VLP), forming the shell that encapsulates the retrotransposons dimeric RNA genome. The particles are assembled from trimer-clustered units and there are holes in the capsid shells that allow for the diffusion of macromolecules. CA also has nucleocapsid-like chaperone activity, promoting primer tRNA(i)-Met annealing to the multipartite primer-binding site (PBS), dimerization of Ty1 RNA and initiation of reverse transcription. The protein is Transposon Ty1-BL Gag polyprotein (TY1A-BL) of Saccharomyces cerevisiae (strain ATCC 204508 / S288c) (Baker's yeast).